The sequence spans 88 residues: MARVTVQDAVEKIGNRFDLILTAARRARQLQLNQSVPLVPEDNDKPTVIALREIEKGLINQDIMDAQEFQKMAKVQETEEAAVALITE.

It belongs to the RNA polymerase subunit omega family. As to quaternary structure, the RNAP catalytic core consists of 2 alpha, 1 beta, 1 beta' and 1 omega subunit. When a sigma factor is associated with the core the holoenzyme is formed, which can initiate transcription.

It catalyses the reaction RNA(n) + a ribonucleoside 5'-triphosphate = RNA(n+1) + diphosphate. Its function is as follows. Promotes RNA polymerase assembly. Latches the N- and C-terminal regions of the beta' subunit thereby facilitating its interaction with the beta and alpha subunits. This chain is DNA-directed RNA polymerase subunit omega, found in Haemophilus influenzae (strain PittEE).